The primary structure comprises 166 residues: Pyruvoyl-dependent arginine decarboxylase (166 aa).

At S45 the chain carries Pyruvic acid (Ser).

This sequence belongs to the PdaD family. Pyruvate is required as a cofactor.

It carries out the reaction L-arginine + H(+) = agmatine + CO2. The polypeptide is Pyruvoyl-dependent arginine decarboxylase (Methanocella arvoryzae (strain DSM 22066 / NBRC 105507 / MRE50)).